Consider the following 102-residue polypeptide: Iron-sulfur cluster assembly protein CyaY (102 aa).

Belongs to the frataxin family.

In terms of biological role, involved in iron-sulfur (Fe-S) cluster assembly. May act as a regulator of Fe-S biogenesis. The protein is Iron-sulfur cluster assembly protein CyaY of Mannheimia succiniciproducens (strain KCTC 0769BP / MBEL55E).